We begin with the raw amino-acid sequence, 575 residues long: Serine/threonine-protein kinase STY46 (575 aa).

The disordered stretch occupies residues 116 to 140 (ADLDSTSNDAGHSSPTRKSIHPPPA). Positions 118–132 (LDSTSNDAGHSSPTR) are enriched in polar residues. The region spanning 178 to 252 (EITFSTEDKP…AKIELQSQSW (75 aa)) is the ACT domain. One can recognise a Protein kinase domain in the interval 290–543 (LKFGHKIASG…EIIEQLQEIA (254 aa)). ATP contacts are provided by residues 296–304 (IASGSYGDL) and K317. D411 acts as the Proton acceptor in catalysis. A Phosphothreonine modification is found at T443.

This sequence belongs to the protein kinase superfamily. Ser/Thr protein kinase family. Post-translationally, autophosphorylated on serine and threonine residues. Autophosphorylated at Thr-443.

It is found in the cytoplasm. The protein localises to the cytosol. The catalysed reaction is L-seryl-[protein] + ATP = O-phospho-L-seryl-[protein] + ADP + H(+). It carries out the reaction L-threonyl-[protein] + ATP = O-phospho-L-threonyl-[protein] + ADP + H(+). Its activity is regulated as follows. Activated by autophosphorylation at Thr-443. Functionally, serine/threonine protein kinase that specifically phosphorylates chloroplast precursor proteins in the cytosol within the cleavable presequences (transit peptides). May be part of a cytosolic regulatory network involved in chloroplast protein import. Does not phosphorylate mitochondrion precursor proteins. Specific for ATP and does not utilize other NTPs. Plays a role in chloroplast biogenesis and differentiation in cotyledons, possibly through phosphorylation of chloroplast preproteins. This chain is Serine/threonine-protein kinase STY46, found in Arabidopsis thaliana (Mouse-ear cress).